We begin with the raw amino-acid sequence, 316 residues long: Glycine--tRNA ligase alpha subunit (316 aa).

This sequence belongs to the class-II aminoacyl-tRNA synthetase family. As to quaternary structure, tetramer of two alpha and two beta subunits.

It localises to the cytoplasm. It carries out the reaction tRNA(Gly) + glycine + ATP = glycyl-tRNA(Gly) + AMP + diphosphate. This is Glycine--tRNA ligase alpha subunit from Paracoccus denitrificans (strain Pd 1222).